The chain runs to 367 residues: UDP-N-acetylglucosamine--N-acetylmuramyl-(pentapeptide) pyrophosphoryl-undecaprenol N-acetylglucosamine transferase (367 aa).

UDP-N-acetyl-alpha-D-glucosamine is bound by residues 15–17 (TGG), asparagine 127, arginine 163, serine 191, isoleucine 249, and glutamine 294.

The protein belongs to the glycosyltransferase 28 family. MurG subfamily.

It is found in the cell inner membrane. It catalyses the reaction di-trans,octa-cis-undecaprenyl diphospho-N-acetyl-alpha-D-muramoyl-L-alanyl-D-glutamyl-meso-2,6-diaminopimeloyl-D-alanyl-D-alanine + UDP-N-acetyl-alpha-D-glucosamine = di-trans,octa-cis-undecaprenyl diphospho-[N-acetyl-alpha-D-glucosaminyl-(1-&gt;4)]-N-acetyl-alpha-D-muramoyl-L-alanyl-D-glutamyl-meso-2,6-diaminopimeloyl-D-alanyl-D-alanine + UDP + H(+). Its pathway is cell wall biogenesis; peptidoglycan biosynthesis. Functionally, cell wall formation. Catalyzes the transfer of a GlcNAc subunit on undecaprenyl-pyrophosphoryl-MurNAc-pentapeptide (lipid intermediate I) to form undecaprenyl-pyrophosphoryl-MurNAc-(pentapeptide)GlcNAc (lipid intermediate II). This is UDP-N-acetylglucosamine--N-acetylmuramyl-(pentapeptide) pyrophosphoryl-undecaprenol N-acetylglucosamine transferase from Burkholderia multivorans (strain ATCC 17616 / 249).